A 490-amino-acid chain; its full sequence is Metal cation symporter ZIP14 (490 aa).

The N-terminal stretch at 1–28 (MELLRPALPSYFLLTLLSIWTAASEARA) is a signal peptide. The Extracellular portion of the chain corresponds to 29–155 (VSTGMPTISA…PSSVEVWGYG (127 aa)). Residues Asn75, Asn85, and Asn100 are each glycosylated (N-linked (GlcNAc...) asparagine). The segment at 127 to 146 (ACSSENQENEENEQTEEGRP) is disordered. A helical transmembrane segment spans residues 156-176 (LLCVTVISLCSLLGASVVPFM). Residues 177–184 (KKTFYKRL) are Cytoplasmic-facing. The chain crosses the membrane as a helical span at residues 185 to 205 (LLYFIALAIGTLYSNALFQLI). Residues 206–222 (PEAFGFNPMEDYYVSKS) lie on the Extracellular side of the membrane. A helical membrane pass occupies residues 223–243 (AVVFGGFYLFFFTEKILKMLL). At 244–395 (KQKNEHHHGH…LLNAGMSLQQ (152 aa)) the chain is on the cytoplasmic side. Residues 249–256 (HHHGHSHY) carry the HHHGHXHX-motif motif. An XEXPHE-motif motif is present at residues 374-379 (EEFPHE). A helical transmembrane segment spans residues 396–416 (ALFFNFLSACCCYVGLGFGIL). The Extracellular portion of the chain corresponds to 417–422 (AGSHFS). A helical membrane pass occupies residues 423-443 (ANWIFALAGGMFLYISLADMF). Residues 444 to 459 (PEMNEVSQEDERKGSA) are Cytoplasmic-facing. The helical transmembrane segment at 460-480 (LIPFVIQNLGLLTGFGIMLVL) threads the bilayer. Residues 481–490 (TMYSGHIQIG) are Extracellular-facing.

Belongs to the ZIP transporter (TC 2.A.5) family. As to quaternary structure, homotrimer. Post-translationally, ubiquitinated. Ubiquitination occurs upon iron depletion. The ubiquitinated form undergoes proteasomal degradation. N-glycosylated. N-glycosylation at Asn-100 is required for iron-regulated extraction of the transporter from membranes and subsequent proteasomal degradation.

It localises to the cell membrane. It is found in the apical cell membrane. The protein localises to the basolateral cell membrane. The protein resides in the early endosome membrane. Its subcellular location is the late endosome membrane. It localises to the lysosome membrane. It catalyses the reaction Zn(2+)(out) + 2 hydrogencarbonate(out) = Zn(2+)(in) + 2 hydrogencarbonate(in). The catalysed reaction is Mn(2+)(out) + 2 hydrogencarbonate(out) = Mn(2+)(in) + 2 hydrogencarbonate(in). The enzyme catalyses Fe(2+)(out) + 2 hydrogencarbonate(out) = Fe(2+)(in) + 2 hydrogencarbonate(in). It carries out the reaction Cd(2+)(out) + 2 hydrogencarbonate(out) = Cd(2+)(in) + 2 hydrogencarbonate(in). Functionally, electroneutral transporter of the plasma membrane mediating the cellular uptake of the divalent metal cations zinc, manganese and iron that are important for tissue homeostasis, metabolism, development and immunity. Functions as an energy-dependent symporter, transporting through the membranes an electroneutral complex composed of a divalent metal cation and two bicarbonate anions. Beside these endogenous cellular substrates, can also import cadmium a non-essential metal which is cytotoxic and carcinogenic. The chain is Metal cation symporter ZIP14 from Bos taurus (Bovine).